We begin with the raw amino-acid sequence, 412 residues long: MSYITKQDKVIAEAIEREFQRQNSNIELIASENFVSEAVMEAQGSVLTNKYAEGYPGRRYYGGCEFVDVTESIAIDRAKALFGAEHVNVQPHSGSQANMAVYLVALGMGDTVLGMNLSHGGHLTHGAPVNFSGKFYNFVEYGVDKDTERINYDEVRKLALEHKPKLIVAGASAYSRTIDFKKFKEIADEVNAKLMVDMAHIAGLVAAGLHPNPVEYADFVTTTTHKTLRGPRGGMILCKEEYKKDIDKTIFPGIQGGPLEHVIAAKAVAFGEALENNFKTYQQQVVKNAKVLAEALINEGFRIVSGGTDNHLVAVDVKGSIGLTGKEAEETLDSVGITCNKNTIPFDQEKPFVTSGIRLGTPAATTRGFDEKAFEEVAKIISLALKNSKDEEKLQQAKERVAKLTAEYPLYQ.

(6S)-5,6,7,8-tetrahydrofolate is bound by residues Leu117 and 121-123 (GHL). Lys226 is subject to N6-(pyridoxal phosphate)lysine.

This sequence belongs to the SHMT family. Homodimer. Pyridoxal 5'-phosphate serves as cofactor.

It is found in the cytoplasm. It carries out the reaction (6R)-5,10-methylene-5,6,7,8-tetrahydrofolate + glycine + H2O = (6S)-5,6,7,8-tetrahydrofolate + L-serine. It functions in the pathway one-carbon metabolism; tetrahydrofolate interconversion. The protein operates within amino-acid biosynthesis; glycine biosynthesis; glycine from L-serine: step 1/1. Its function is as follows. Catalyzes the reversible interconversion of serine and glycine with tetrahydrofolate (THF) serving as the one-carbon carrier. This reaction serves as the major source of one-carbon groups required for the biosynthesis of purines, thymidylate, methionine, and other important biomolecules. Also exhibits THF-independent aldolase activity toward beta-hydroxyamino acids, producing glycine and aldehydes, via a retro-aldol mechanism. This chain is Serine hydroxymethyltransferase, found in Staphylococcus aureus (strain USA300).